The following is a 463-amino-acid chain: NADH dehydrogenase [ubiquinone] iron-sulfur protein 2, mitochondrial (463 aa).

The transit peptide at 1–33 (MAALRALCRLRGAAAQVLRPGAGVRLPIQPSRG) directs the protein to the mitochondrion. Lysine 62 carries the N6-acetyllysine modification. At arginine 118 the chain carries Symmetric dimethylarginine. [4Fe-4S] cluster-binding residues include cysteine 326, cysteine 332, and cysteine 347.

This sequence belongs to the complex I 49 kDa subunit family. In terms of assembly, core subunit of respiratory chain NADH dehydrogenase (Complex I) which is composed of 45 different subunits. Component of the iron-sulfur (IP) fragment of the enzyme. Interacts with NDUFAF3. Interacts with NDUFAF7. Interacts with CERS2. The cofactor is [4Fe-4S] cluster. Dimethylation at Arg-118 by NDUFAF7 takes place after NDUFS2 assembles into the complex I, leading to stabilize the early intermediate complex.

The protein localises to the mitochondrion inner membrane. The enzyme catalyses a ubiquinone + NADH + 5 H(+)(in) = a ubiquinol + NAD(+) + 4 H(+)(out). Core subunit of the mitochondrial membrane respiratory chain NADH dehydrogenase (Complex I) which catalyzes electron transfer from NADH through the respiratory chain, using ubiquinone as an electron acceptor. Essential for the catalytic activity and assembly of complex I. Redox-sensitive, critical component of the oxygen-sensing pathway in the pulmonary vasculature which plays a key role in acute pulmonary oxygen-sensing and hypoxic pulmonary vasoconstriction. Plays an important role in carotid body sensing of hypoxia. Essential for glia-like neural stem and progenitor cell proliferation, differentiation and subsequent oligodendrocyte or neuronal maturation. The chain is NADH dehydrogenase [ubiquinone] iron-sulfur protein 2, mitochondrial (NDUFS2) from Bos taurus (Bovine).